A 145-amino-acid chain; its full sequence is uncharacterized protein (145 aa).

This sequence belongs to the asfivirus K145R family.

The protein resides in the virion. This is an uncharacterized protein from African swine fever virus (isolate Tick/South Africa/Pretoriuskop Pr4/1996) (ASFV).